Here is a 357-residue protein sequence, read N- to C-terminus: MAAAEVADTQLMLGVGLIEKDTNGEVLWVWCYPSTTATLRNLLLRKCCLTDENKLLHPFVFGQYRRTWFYITTIEVPDSSILKKVTHFSIVLTAKDFNPEKYAAFTRILCRMYLKHGSPVKMMESYIAVLTKGICQSEENGSFLSKDFDARKAYLAGSIKDIVSQFGMETVILHTALMLKKRIVVYHPKIEAVQEFTRTLPALVWHRQDWTILHSYVHLNADELEALQMCTGYVAGFVDLEVSNRPDLYDVFVNLAESEITIAPLAKEAMAMGKLHKEMGQLIVQSAEDPEKSESHVIQDIALKTREIFTNLAPFSEVSADGEKRVLNLEALKQKRFPPATENFLYHLAAAEQMLKI.

The uDENN domain maps to 1–140; the sequence is MAAAEVADTQ…TKGICQSEEN (140 aa). Residues 165–299 enclose the cDENN domain; it reads QFGMETVILH…PEKSESHVIQ (135 aa). One can recognise a dDENN domain in the interval 301-357; it reads IALKTREIFTNLAPFSEVSADGEKRVLNLEALKQKRFPPATENFLYHLAAAEQMLKI.

Belongs to the DENND10 family. Interacts with the coiled-coil heterodimer of CCDC22 and CCDC93; the interaction is direct. Interacts with RAB27A and RAB27B (GDP-bound forms preferentially).

The protein localises to the late endosome. Functionally, guanine nucleotide exchange factor (GEF) regulating homeostasis of late endocytic pathway, including endosomal positioning, maturation and secretion, possibly through activating Rab proteins such as RAB27A and RAB27B. Promotes the exchange of GDP to GTP, converting inactive GDP-bound RAB27A and RAB27B into their active GTP-bound form. This is DENN domain-containing protein 10 from Homo sapiens (Human).